Reading from the N-terminus, the 273-residue chain is Mediator of RNA polymerase II transcription subunit 18 (273 aa).

Low complexity predominate over residues 90–106 (GAQSSAASSGDPDAPMS). The interval 90–114 (GAQSSAASSGDPDAPMSGTDTGTNF) is disordered.

Belongs to the Mediator complex subunit 18 family. As to quaternary structure, component of the Mediator complex.

Its subcellular location is the nucleus. In terms of biological role, component of the Mediator complex, a coactivator involved in the regulated transcription of nearly all RNA polymerase II-dependent genes. Mediator functions as a bridge to convey information from gene-specific regulatory proteins to the basal RNA polymerase II transcription machinery. Mediator is recruited to promoters by direct interactions with regulatory proteins and serves as a scaffold for the assembly of a functional preinitiation complex with RNA polymerase II and the general transcription factors. This chain is Mediator of RNA polymerase II transcription subunit 18 (srb5), found in Aspergillus oryzae (strain ATCC 42149 / RIB 40) (Yellow koji mold).